Consider the following 548-residue polypeptide: Probable aquaglyceroporin-4 (548 aa).

A compositionally biased stretch (polar residues) spans M1–G22. Disordered stretches follow at residues M1–T63, S76–H101, and K158–D270. The Cytoplasmic portion of the chain corresponds to M1 to P290. Residues P38–K48 show a composition bias toward basic and acidic residues. 2 stretches are compositionally biased toward polar residues: residues R77 to S97 and S171 to T200. Residues P249–C265 are compositionally biased toward basic and acidic residues. The chain crosses the membrane as a helical span at residues L291–V311. An N-linked (GlcNAc...) asparagine glycan is attached at N312. Over N312–S327 the chain is Extracellular. A helical membrane pass occupies residues C328 to A348. The Cytoplasmic portion of the chain corresponds to H349 to C369. Residues N351 to A353 carry the NPA 1 motif. Residues V370–M390 traverse the membrane as a helical segment. The Extracellular segment spans residues Y391–K420. Residues S421–G441 traverse the membrane as a helical segment. Residues D442–P448 lie on the Cytoplasmic side of the membrane. A helical transmembrane segment spans residues G449 to G469. At Y470 to P508 the chain is on the extracellular side. Residues N477–A479 carry the NPA 2 motif. A helical transmembrane segment spans residues W509–V529. At G530–N548 the chain is on the cytoplasmic side.

This sequence belongs to the MIP/aquaporin (TC 1.A.8) family.

It is found in the membrane. It carries out the reaction H2O(in) = H2O(out). The catalysed reaction is glycerol(in) = glycerol(out). Probable water/glycerol channel that may have redundant functions with FgAQP2. This chain is Probable aquaglyceroporin-4, found in Gibberella zeae (strain ATCC MYA-4620 / CBS 123657 / FGSC 9075 / NRRL 31084 / PH-1) (Wheat head blight fungus).